We begin with the raw amino-acid sequence, 309 residues long: Taste receptor type 2 member 45 (309 aa).

M1 is a topological domain (extracellular). The chain crosses the membrane as a helical span at residues 2–22 (ITFLPIIFSILVVVTFVIGNF). At 23-55 (ANGFIALVNSTEWVKRQKISFADQIVTALAVSR) the chain is on the cytoplasmic side. The helical transmembrane segment at 56 to 76 (VGLLWVLLLNWYSTVLNPAFY) threads the bilayer. The Extracellular segment spans residues 77–98 (SVELRTTAYNIWAVTGHFSNWL). The chain crosses the membrane as a helical span at residues 99–119 (ATSLSIFYLLKIANFSNLIFL). Residues 120 to 126 (HLKRRVK) are Cytoplasmic-facing. The chain crosses the membrane as a helical span at residues 127–147 (SVILVMLLGPLLFLACHLFVV). The Extracellular segment spans residues 148 to 178 (NMNQIVWTKEYEGNMTWKIKLRRAMYLSDTT). The N-linked (GlcNAc...) asparagine glycan is linked to N161. The helical transmembrane segment at 179 to 199 (VTMLANLVPFTVTLISFLLLV) threads the bilayer. At 200–229 (CSLCEHLKKMQLHGKGSQDPSTKVHIKALQ) the chain is on the cytoplasmic side. The chain crosses the membrane as a helical span at residues 230 to 250 (TVISFLLLCAIYFVSVIISVW). Topologically, residues 251–259 (SFKNLENKP) are extracellular. A helical transmembrane segment spans residues 260–280 (VFMFCQAIGFSCSSAHPFILI). The Cytoplasmic portion of the chain corresponds to 281 to 309 (WGNKKLKQPFLSVLWQMRYWVKGEKPSSS).

This sequence belongs to the G-protein coupled receptor T2R family.

It is found in the membrane. Functionally, receptor that may play a role in the perception of bitterness and is gustducin-linked. May play a role in sensing the chemical composition of the gastrointestinal content. The activity of this receptor may stimulate alpha gustducin, mediate PLC-beta-2 activation and lead to the gating of TRPM5. The polypeptide is Taste receptor type 2 member 45 (TAS2R45) (Pan paniscus (Pygmy chimpanzee)).